Here is a 520-residue protein sequence, read N- to C-terminus: Keratin, type II cytoskeletal 72 (520 aa).

The interval 1–133 is head; that stretch reads MSRQLTLYPG…DPEIQKVRAQ (133 aa). Residues 134–169 form a coil 1A region; that stretch reads EREQIKALNNKFASFIDKVRFLEQQNQVLETKWELL. The region spanning 134–447 is the IF rod domain; that stretch reads EREQIKALNN…KLLESEESRM (314 aa). Residues 170 to 188 are linker 1; it reads QQLDLNNSKRSLEPVHESY. Positions 189–280 are coil 1B; sequence ISNLQKQLEI…VLFEGEIAQM (92 aa). The linker 12 stretch occupies residues 281-304; it reads QSHISDTSVILSMDNNRQLDLDSI. The tract at residues 305-443 is coil 2; sequence LAEVRAQYEE…ATYRKLLESE (139 aa). The segment at 444-520 is tail; it reads ESRMAGEYPN…SSGTTKKTSR (77 aa). The tract at residues 494–520 is disordered; the sequence is KGSCGSELKDPPAKTSGSSGTTKKTSR. The span at 507–520 shows a compositional bias: low complexity; sequence KTSGSSGTTKKTSR.

It belongs to the intermediate filament family. In terms of assembly, heterotetramer of two type I and two type II keratins.

Has a role in hair formation. Specific component of keratin intermediate filaments in the inner root sheath (IRS) of the hair follicle. This Mus musculus (Mouse) protein is Keratin, type II cytoskeletal 72 (Krt72).